We begin with the raw amino-acid sequence, 134 residues long: Histone H2A (134 aa).

Residues 1-10 (MTGGKSGGKA) are compositionally biased toward gly residues. Positions 1–26 (MTGGKSGGKASGSKSSAQSRSSKAGL) are disordered. An N6-acetyllysine mark is found at K5 and K9. The span at 11–25 (SGSKSSAQSRSSKAG) shows a compositional bias: low complexity. Q107 carries the post-translational modification N5-methylglutamine. S131 carries the post-translational modification Phosphoserine. Positions 131–132 (SQ) match the [ST]-Q motif motif.

Belongs to the histone H2A family. The nucleosome is a histone octamer containing two molecules each of H2A, H2B, H3 and H4 assembled in one H3-H4 heterotetramer and two H2A-H2B heterodimers. The octamer wraps approximately 147 bp of DNA. In terms of processing, phosphorylated to form H2AS128ph (gamma-H2A) in response to DNA double-strand breaks (DSBs) generated by exogenous genotoxic agents and by stalled replication forks. Phosphorylation is dependent on the DNA damage checkpoint kinases MEC1/ATR and TEL1/ATM, spreads on either side of a detected DSB site and may mark the surrounding chromatin for recruitment of proteins required for DNA damage signaling and repair. Gamma-H2A is removed from the DNA prior to the strand invasion-primer extension step of the repair process and subsequently dephosphorylated. Dephosphorylation is necessary for efficient recovery from the DNA damage checkpoint. Acetylated by ESA1 to form H2AK4ac and H2AK7ac.

Its subcellular location is the nucleus. The protein resides in the chromosome. In terms of biological role, core component of nucleosome which plays a central role in DNA double strand break (DSB) repair. Nucleosomes wrap and compact DNA into chromatin, limiting DNA accessibility to the cellular machineries which require DNA as a template. Histones thereby play a central role in transcription regulation, DNA repair, DNA replication and chromosomal stability. DNA accessibility is regulated via a complex set of post-translational modifications of histones, also called histone code, and nucleosome remodeling. This Phaeosphaeria nodorum (strain SN15 / ATCC MYA-4574 / FGSC 10173) (Glume blotch fungus) protein is Histone H2A (HTA1).